The sequence spans 358 residues: GDSL esterase/lipase EXL5 (358 aa).

Residues M1–A21 form the signal peptide. A glycan (N-linked (GlcNAc...) asparagine) is linked at N24. S36 acts as the Nucleophile in catalysis. Residues D333 and H336 contribute to the active site.

Belongs to the 'GDSL' lipolytic enzyme family. In terms of tissue distribution, flower buds.

The protein resides in the secreted. This Arabidopsis thaliana (Mouse-ear cress) protein is GDSL esterase/lipase EXL5 (EXL5).